Here is a 752-residue protein sequence, read N- to C-terminus: Granule-bound starch synthase 2, chloroplastic/amyloplastic (752 aa).

The transit peptide at 1-57 directs the protein to the chloroplast; the sequence is MMLSLGSDATVLPFHAKNLKFTPKLSTLNGDLAFSKGLGVGRLNCGSVRLNHKQHVR. Disordered regions lie at residues 116 to 146 and 224 to 253; these read LEGN…SGSA and FENF…EKPP. Lys275 provides a ligand contact to ADP-alpha-D-glucose.

Belongs to the glycosyltransferase 1 family. Bacterial/plant glycogen synthase subfamily. As to expression, widely expressed.

It is found in the plastid. It localises to the chloroplast. The protein resides in the amyloplast. The catalysed reaction is [(1-&gt;4)-alpha-D-glucosyl](n) + ADP-alpha-D-glucose = [(1-&gt;4)-alpha-D-glucosyl](n+1) + ADP + H(+). The protein operates within glycan biosynthesis; starch biosynthesis. The sequence is that of Granule-bound starch synthase 2, chloroplastic/amyloplastic from Pisum sativum (Garden pea).